The sequence spans 69 residues: Cytochrome c oxidase subunit 8A, mitochondrial (69 aa).

Residues 1–25 (MSVLTSLLLRGLTGSARWLPVPRAK) constitute a mitochondrion transit peptide. The short motif at 2–19 (SVLTSLLLRGLTGSARWL) is the SIFI-degron element. Over 26–36 (VHSMPPEVELG) the chain is Mitochondrial matrix. A helical transmembrane segment spans residues 37 to 60 (IMEKAIGLTSCFVSLFLPAGWILS). Topologically, residues 61 to 69 (HLEDYKRPE) are mitochondrial intermembrane.

It belongs to the cytochrome c oxidase VIII family. Component of the cytochrome c oxidase (complex IV, CIV), a multisubunit enzyme composed of 14 subunits. The complex is composed of a catalytic core of 3 subunits MT-CO1, MT-CO2 and MT-CO3, encoded in the mitochondrial DNA, and 11 supernumerary subunits COX4I, COX5A, COX5B, COX6A, COX6B, COX6C, COX7A, COX7B, COX7C, COX8 and NDUFA4, which are encoded in the nuclear genome. The complex exists as a monomer or a dimer and forms supercomplexes (SCs) in the inner mitochondrial membrane with NADH-ubiquinone oxidoreductase (complex I, CI) and ubiquinol-cytochrome c oxidoreductase (cytochrome b-c1 complex, complex III, CIII), resulting in different assemblies (supercomplex SCI(1)III(2)IV(1) and megacomplex MCI(2)III(2)IV(2)). Post-translationally, in response to mitochondrial stress, the precursor protein is ubiquitinated by the SIFI complex in the cytoplasm before mitochondrial import, leading to its degradation. Within the SIFI complex, UBR4 initiates ubiquitin chain that are further elongated or branched by KCMF1.

Its subcellular location is the mitochondrion inner membrane. It participates in energy metabolism; oxidative phosphorylation. Its function is as follows. Component of the cytochrome c oxidase, the last enzyme in the mitochondrial electron transport chain which drives oxidative phosphorylation. The respiratory chain contains 3 multisubunit complexes succinate dehydrogenase (complex II, CII), ubiquinol-cytochrome c oxidoreductase (cytochrome b-c1 complex, complex III, CIII) and cytochrome c oxidase (complex IV, CIV), that cooperate to transfer electrons derived from NADH and succinate to molecular oxygen, creating an electrochemical gradient over the inner membrane that drives transmembrane transport and the ATP synthase. Cytochrome c oxidase is the component of the respiratory chain that catalyzes the reduction of oxygen to water. Electrons originating from reduced cytochrome c in the intermembrane space (IMS) are transferred via the dinuclear copper A center (CU(A)) of subunit 2 and heme A of subunit 1 to the active site in subunit 1, a binuclear center (BNC) formed by heme A3 and copper B (CU(B)). The BNC reduces molecular oxygen to 2 water molecules using 4 electrons from cytochrome c in the IMS and 4 protons from the mitochondrial matrix. This Macaca silenus (Lion-tailed macaque) protein is Cytochrome c oxidase subunit 8A, mitochondrial (COX8A).